We begin with the raw amino-acid sequence, 454 residues long: Probable DNA primase large subunit (454 aa).

[4Fe-4S] cluster is bound by residues cysteine 280, cysteine 359, cysteine 375, and cysteine 415.

The protein belongs to the eukaryotic-type primase large subunit family. Heterodimer of a small subunit and a large subunit. The cofactor is [4Fe-4S] cluster.

DNA primase is the polymerase that synthesizes small RNA primers for the Okazaki fragments made during discontinuous DNA replication. This chain is Probable DNA primase large subunit, found in Arabidopsis thaliana (Mouse-ear cress).